The sequence spans 333 residues: Phosphate acyltransferase (333 aa).

This sequence belongs to the PlsX family. Homodimer. Probably interacts with PlsY.

Its subcellular location is the cytoplasm. The enzyme catalyses a fatty acyl-[ACP] + phosphate = an acyl phosphate + holo-[ACP]. The protein operates within lipid metabolism; phospholipid metabolism. Catalyzes the reversible formation of acyl-phosphate (acyl-PO(4)) from acyl-[acyl-carrier-protein] (acyl-ACP). This enzyme utilizes acyl-ACP as fatty acyl donor, but not acyl-CoA. This Lactobacillus gasseri (strain ATCC 33323 / DSM 20243 / BCRC 14619 / CIP 102991 / JCM 1131 / KCTC 3163 / NCIMB 11718 / NCTC 13722 / AM63) protein is Phosphate acyltransferase.